The following is a 295-amino-acid chain: Nitrogenase iron protein (295 aa).

11–18 (GKGGIGKS) provides a ligand contact to ATP. C99 contributes to the [4Fe-4S] cluster binding site. At R102 the chain carries ADP-ribosylarginine; by dinitrogenase reductase ADP-ribosyltransferase. C133 contributes to the [4Fe-4S] cluster binding site.

This sequence belongs to the NifH/BchL/ChlL family. Homodimer. Requires [4Fe-4S] cluster as cofactor. The reversible ADP-ribosylation of Arg-102 inactivates the nitrogenase reductase and regulates nitrogenase activity.

The enzyme catalyses N2 + 8 reduced [2Fe-2S]-[ferredoxin] + 16 ATP + 16 H2O = H2 + 8 oxidized [2Fe-2S]-[ferredoxin] + 2 NH4(+) + 16 ADP + 16 phosphate + 6 H(+). The key enzymatic reactions in nitrogen fixation are catalyzed by the nitrogenase complex, which has 2 components: the iron protein and the molybdenum-iron protein. This Zymomonas mobilis subsp. mobilis (strain ATCC 31821 / ZM4 / CP4) protein is Nitrogenase iron protein.